A 636-amino-acid polypeptide reads, in one-letter code: 1-deoxy-D-xylulose-5-phosphate synthase (636 aa).

Residues His74 and 115–117 (GHA) contribute to the thiamine diphosphate site. Asp146 serves as a coordination point for Mg(2+). Thiamine diphosphate contacts are provided by residues 147 to 148 (GA), Asn175, Tyr285, and Glu368. Asn175 lines the Mg(2+) pocket.

This sequence belongs to the transketolase family. DXPS subfamily. Homodimer. The cofactor is Mg(2+). Requires thiamine diphosphate as cofactor.

The enzyme catalyses D-glyceraldehyde 3-phosphate + pyruvate + H(+) = 1-deoxy-D-xylulose 5-phosphate + CO2. The protein operates within metabolic intermediate biosynthesis; 1-deoxy-D-xylulose 5-phosphate biosynthesis; 1-deoxy-D-xylulose 5-phosphate from D-glyceraldehyde 3-phosphate and pyruvate: step 1/1. In terms of biological role, catalyzes the acyloin condensation reaction between C atoms 2 and 3 of pyruvate and glyceraldehyde 3-phosphate to yield 1-deoxy-D-xylulose-5-phosphate (DXP). This chain is 1-deoxy-D-xylulose-5-phosphate synthase, found in Anaeromyxobacter sp. (strain K).